We begin with the raw amino-acid sequence, 284 residues long: MKDSLQTIGVFVRPTHYQNPLFEKLEQAKEWVLKLLEDEGFESFMIDSLDGAKDARLIEKADAFLCLGGDGTILGALRMTHSYNKPCFGVRIGNLGFLSAVELNGLKDFLQDFKQDRIKLEEHLALEGRIGKTSFYAINEIVIAKKKALGVLDIKAYAGHTPFNTYKGDGLIIATPLGSTAYNLSAHGPIVHALSQSYILTPLCDFSLTQRPLVLGAEFCLNFCAHEDALVVIDGQATYDLKANQPLYIQKSPTTTKLLQKNSRDYFKVLKEKLLWGESPSKKR.

Aspartate 70 (proton acceptor) is an active-site residue. Residues 70–71 (DG), 139–140 (NE), lysine 167, aspartate 169, leucine 177, 180–185 (TAYNLS), and glutamine 236 each bind NAD(+).

It belongs to the NAD kinase family. The cofactor is a divalent metal cation.

Its subcellular location is the cytoplasm. It catalyses the reaction NAD(+) + ATP = ADP + NADP(+) + H(+). Functionally, involved in the regulation of the intracellular balance of NAD and NADP, and is a key enzyme in the biosynthesis of NADP. Catalyzes specifically the phosphorylation on 2'-hydroxyl of the adenosine moiety of NAD to yield NADP. The sequence is that of NAD kinase from Helicobacter pylori (strain ATCC 700392 / 26695) (Campylobacter pylori).